The primary structure comprises 113 residues: uncharacterized protein (113 aa).

The HTH cro/C1-type domain maps to Leu-16–Trp-70. Residues Ile-27 to Asn-46 constitute a DNA-binding region (H-T-H motif).

It belongs to the VapA/VapI family.

This is an uncharacterized protein from Escherichia coli O6:H1 (strain CFT073 / ATCC 700928 / UPEC).